Reading from the N-terminus, the 244-residue chain is Protein FAM168A (244 aa).

Methionine 1 is modified (N-acetylmethionine). Asymmetric dimethylarginine is present on arginine 102. The disordered stretch occupies residues 107–126 (TPYKVPPTQSNTAPPPYSPS).

The protein belongs to the FAM168 family. Interacts with POLB. Interacts with AKT1 and MT1X. May interact with FAM168B.

Its function is as follows. In cancer context, protects cells from induced-DNA damage and apoptosis. Acts, at least in part, through PI3K/AKT/NFKB signaling pathway and by preventing POLB degradation. Decreases POLB ubiquitation and stabilizes its protein levels. This is Protein FAM168A (Fam168a) from Mus musculus (Mouse).